Consider the following 338-residue polypeptide: Auxin-responsive protein IAA9 (338 aa).

The disordered stretch occupies residues 1-25 (MSPEEELQSNVSVASSSPTSNCISR). Over residues 9-21 (SNVSVASSSPTSN) the composition is skewed to low complexity. The EAR-like (transcriptional repression) motif lies at 68 to 72 (LTLGL). The segment at 150–186 (ATQSVTKKDVPQNIPKGQSSTTNNSSSPPAAKAQIVG) is disordered. The segment covering 168-180 (SSTTNNSSSPPAA) has biased composition (low complexity). One can recognise a PB1 domain in the interval 216 to 318 (ALFVKVSMDG…VCKKLKIMKG (103 aa)).

This sequence belongs to the Aux/IAA family. In terms of assembly, homodimers and heterodimers. Interacts with TPL. In terms of processing, phosphorylated by phytochrome A in vitro. As to expression, highly expressed in the whole plant.

Its subcellular location is the nucleus. Functionally, aux/IAA proteins are short-lived transcriptional factors that function as repressors of early auxin response genes at low auxin concentrations. Repression is thought to result from the interaction with auxin response factors (ARFs), proteins that bind to the auxin-responsive promoter element (AuxRE). Formation of heterodimers with ARF proteins may alter their ability to modulate early auxin response genes expression. The protein is Auxin-responsive protein IAA9 (IAA9) of Arabidopsis thaliana (Mouse-ear cress).